The sequence spans 356 residues: Cyclin-D1-binding protein 1 (356 aa).

Residue A2 is modified to N-acetylalanine. Interaction with TCF3 stretches follow at residues 2 to 181 (ASST…VDFV) and 147 to 356 (ISCN…AAEL). The interval 2–187 (ASSTAAVPFL…VDFVKDAHEE (186 aa)) is interaction with RPLP0. The required for interaction with CCND1 stretch occupies residues 2–205 (ASSTAAVPFL…DPYSGLLNDS (204 aa)). A disordered region spans residues 198-224 (YSGLLNDSEDNSDSHSDEDGVLGLPSN). Residues 236-356 (LIIPCLALVR…KALTQRAAEL (121 aa)) form an interaction with RPLP0 region.

Belongs to the CCNDBP1 family. In terms of assembly, interacts with CCND1 and GRAP2. May also interact with COPS5, RPLP0, SIRT6, SYF2 and TCF3. Post-translationally, phosphorylated. In terms of tissue distribution, expressed at high levels in brain, intestine, muscle and ovary and at lower levels in heart, kidney, liver, lung, spleen and testis.

The protein resides in the cytoplasm. The protein localises to the nucleus. In terms of biological role, may negatively regulate cell cycle progression. May act at least in part via inhibition of the cyclin-D1/CDK4 complex, thereby preventing phosphorylation of RB1 and blocking E2F-dependent transcription. May be required for hepatocyte proliferation. The polypeptide is Cyclin-D1-binding protein 1 (Ccndbp1) (Mus musculus (Mouse)).